Here is a 351-residue protein sequence, read N- to C-terminus: Nuclear inhibitor of protein phosphatase 1 (351 aa).

The interaction with CDC5L, SF3B1 and MELK stretch occupies residues 1 to 142; sequence MAAAANSGSS…LPSAVKGDEK (142 aa). The 53-residue stretch at 49–101 folds into the FHA domain; sequence YLFGRNPDLCDFTIDHQSCSRVHAALVYHKHLKRVFLIDLNSTHGTFLGHIRL. Positions 143–224 are interaction with EED; that stretch reads MGGEDDELKG…VDPSVGRFRN (82 aa). Threonine 161 bears the Phosphothreonine mark. Serine 178 and serine 199 each carry phosphoserine. Short sequence motifs (nuclear localization signal) lie at residues 185–209 and 210–240; these read GNLD…DDEI and INPE…RVEG. An involved in PP-1 inhibition region spans residues 191–200; the sequence is RPKRKRKNSR. Positions 200-203 are involved in PP-1 binding; the sequence is RVTF. The residue at position 204 (serine 204) is a Phosphoserine. Serine 249 carries the post-translational modification Phosphoserine. Tyrosine 264 carries the phosphotyrosine; by LYN; in vitro modification. The interaction with EED stretch occupies residues 310–329; sequence AVNMNPAPNPAVYNPEAVNE. Residues 316 to 351 are disordered; it reads APNPAVYNPEAVNEPKKKKYAKEAWPGKKPTPSLLI. Residues 330–351 are RNA-binding; sequence PKKKKYAKEAWPGKKPTPSLLI. An involved in PP-1 inhibition region spans residues 331–337; it reads KKKKYAK. Residue tyrosine 335 is modified to Phosphotyrosine.

As to quaternary structure, interacts with phosphorylated CDC5L, SF3B1 and MELK. Interacts with EED, in a nucleic acid-stimulated manner. Part of a complex consisting of PPP1R8, EED, HDAC2 and PP-1. Part of the spliceosome. Interacts with PPP1CA, PPP1CB and PPP1CC. Mg(2+) serves as cofactor. May be inactivated by phosphorylation on Ser-199 or Ser-204. Phosphorylated by Lyn in vitro on Tyr-264, and also on Tyr-335 in the presence of RNA. As to expression, ubiquitously expressed, with highest levels in heart and skeletal muscle, followed by brain, placenta, lung, liver and pancreas. Less abundant in kidney. The concentration and ratio between isoforms is cell-type dependent. Isoform Alpha (&gt;90%) and isoform Beta were found in brain, heart and kidney. Isoform Gamma is mainly found in B-cells and T-lymphocytes, and has been found in 293 embryonic kidney cells.

The protein localises to the nucleus. It is found in the nucleus speckle. Its subcellular location is the cytoplasm. In terms of biological role, inhibitor subunit of the major nuclear protein phosphatase-1 (PP-1). It has RNA-binding activity but does not cleave RNA and may target PP-1 to RNA-associated substrates. May also be involved in pre-mRNA splicing. Binds DNA and might act as a transcriptional repressor. Seems to be required for cell proliferation. Functionally, isoform Gamma is a site-specific single-strand endoribonuclease that cleaves single strand RNA 3' to purines and pyrimidines in A+U-rich regions. It generates 5'-phosphate termini at the site of cleavage. This isoform does not inhibit PP-1. May be implicated in mRNA splicing. This is Nuclear inhibitor of protein phosphatase 1 (PPP1R8) from Homo sapiens (Human).